An 86-amino-acid polypeptide reads, in one-letter code: Large ribosomal subunit protein bL31B (86 aa).

It belongs to the bacterial ribosomal protein bL31 family. Type B subfamily. Part of the 50S ribosomal subunit.

This Cupriavidus pinatubonensis (strain JMP 134 / LMG 1197) (Cupriavidus necator (strain JMP 134)) protein is Large ribosomal subunit protein bL31B.